The following is a 442-amino-acid chain: Protein PRRC1-B (442 aa).

Residues 1–24 (MMEESGIETTPPSTPPPSTIGTSV) form a disordered region.

Belongs to the PRRC1 family.

It is found in the golgi apparatus. This Xenopus laevis (African clawed frog) protein is Protein PRRC1-B (prrc1-b).